The chain runs to 269 residues: Hydroxymethylpyrimidine/phosphomethylpyrimidine kinase (269 aa).

Gln45 contacts 4-amino-5-hydroxymethyl-2-methylpyrimidine.

It belongs to the ThiD family.

The enzyme catalyses 4-amino-5-hydroxymethyl-2-methylpyrimidine + ATP = 4-amino-2-methyl-5-(phosphooxymethyl)pyrimidine + ADP + H(+). It catalyses the reaction 4-amino-2-methyl-5-(phosphooxymethyl)pyrimidine + ATP = 4-amino-2-methyl-5-(diphosphooxymethyl)pyrimidine + ADP. It participates in cofactor biosynthesis; thiamine diphosphate biosynthesis; 4-amino-2-methyl-5-diphosphomethylpyrimidine from 5-amino-1-(5-phospho-D-ribosyl)imidazole: step 2/3. The protein operates within cofactor biosynthesis; thiamine diphosphate biosynthesis; 4-amino-2-methyl-5-diphosphomethylpyrimidine from 5-amino-1-(5-phospho-D-ribosyl)imidazole: step 3/3. Its function is as follows. Catalyzes the phosphorylation of hydroxymethylpyrimidine phosphate (HMP-P) to HMP-PP, and of HMP to HMP-P. In Helicobacter pylori (strain J99 / ATCC 700824) (Campylobacter pylori J99), this protein is Hydroxymethylpyrimidine/phosphomethylpyrimidine kinase (thiD).